The sequence spans 414 residues: MNRQSWLLNLSLLKTHPAFRAVFLARFISIVSLGLLGVAVPVQIQMMTHSTWQVGLSVTLTGGAMFIGLMVGGVLADRYERKKVILLARGTCGIGFIGLCVNSLLPEPSLLAIYLLGLWDGFFASLGVTALLAATPALVGRENLMQAGAITMLTVRLGSVISPMLGGILLASGGVAWNYGLAAAGTFITLLPLLTLPRLPVPPQPRENPFIALLAAFRFLLASPLIGGIALLGGLVTMASAVRVLYPALAMSWQMSAAQIGLLYAAIPLGAAIGALTSGQLAHSVRPGLIMLVSTVGSFLAVGLFAIMPVWTAGVICLALFGWLSAISSLLQYTLLQTQTPENMLGRMNGLWTAQNVTGDAIGAALLGGLGAMMTPVASASVSGFGLVIIGLLLLLVLGELRRFRQTPPVSDAG.

At 1 to 21 (MNRQSWLLNLSLLKTHPAFRA) the chain is on the cytoplasmic side. A helical transmembrane segment spans residues 22-42 (VFLARFISIVSLGLLGVAVPV). At 43–55 (QIQMMTHSTWQVG) the chain is on the periplasmic side. A helical transmembrane segment spans residues 56–76 (LSVTLTGGAMFIGLMVGGVLA). Over 77–83 (DRYERKK) the chain is Cytoplasmic. A helical membrane pass occupies residues 84 to 104 (VILLARGTCGIGFIGLCVNSL). Residues 105–109 (LPEPS) lie on the Periplasmic side of the membrane. A helical membrane pass occupies residues 110–130 (LLAIYLLGLWDGFFASLGVTA). Residues 131–156 (LLAATPALVGRENLMQAGAITMLTVR) are Cytoplasmic-facing. Residues 157 to 177 (LGSVISPMLGGILLASGGVAW) form a helical membrane-spanning segment. Position 178 (Asn178) is a topological domain, periplasmic. Residues 179 to 199 (YGLAAAGTFITLLPLLTLPRL) traverse the membrane as a helical segment. The Cytoplasmic segment spans residues 200–218 (PVPPQPRENPFIALLAAFR). The chain crosses the membrane as a helical span at residues 219 to 239 (FLLASPLIGGIALLGGLVTMA). Residues 240–256 (SAVRVLYPALAMSWQMS) lie on the Periplasmic side of the membrane. A helical transmembrane segment spans residues 257-277 (AAQIGLLYAAIPLGAAIGALT). Residues 278-287 (SGQLAHSVRP) lie on the Cytoplasmic side of the membrane. The chain crosses the membrane as a helical span at residues 288-307 (GLIMLVSTVGSFLAVGLFAI). Over 308 to 313 (MPVWTA) the chain is Periplasmic. A helical membrane pass occupies residues 314–336 (GVICLALFGWLSAISSLLQYTLL). Over 337-356 (QTQTPENMLGRMNGLWTAQN) the chain is Cytoplasmic. A helical transmembrane segment spans residues 357–377 (VTGDAIGAALLGGLGAMMTPV). Residue Ala378 is a topological domain, periplasmic. A helical membrane pass occupies residues 379-399 (SASVSGFGLVIIGLLLLLVLG). The Cytoplasmic portion of the chain corresponds to 400–414 (ELRRFRQTPPVSDAG).

This sequence belongs to the major facilitator superfamily. EntS (TC 2.A.1.38) family.

The protein localises to the cell inner membrane. Component of an export pathway for enterobactin. The protein is Enterobactin exporter EntS of Salmonella choleraesuis (strain SC-B67).